Here is a 380-residue protein sequence, read N- to C-terminus: MHVIGLISGTSVDGIDAALVDLSGTSLDLQVELLAAHTYPYSEPVRSQIISLCKGEAIPLAELALLDEAIAQEFAQAALEIQQGQPAAELIGSHGQTVYHRPVIGNTPAYTLQLGRGAIIAQQTGLPTITNFRVADTNAGGEGAPLVSRIDICLFSHPQQRRCVQNIGGIANLTYLPPLSDVAQIGVGVQGWDTGPGNSLLDLAVQYLSGGRQAYDDKGNWAAQGTPCQALVEQWLSHPYFEQAPPKSTGRELFGWDYLQTCLRDAEPYHLSAEDFLATLTELTAASIVLNYRQFLPALPDQVLLCGGGVRNHYLKQRLATLLTPIPVLSTNEVGLSADAKEAIAFAVLGYWRYLGLPGNVPAVTGARREVLLGELHTYP.

Position 9-16 (9-16) interacts with ATP; sequence GTSVDGID.

It belongs to the anhydro-N-acetylmuramic acid kinase family.

The enzyme catalyses 1,6-anhydro-N-acetyl-beta-muramate + ATP + H2O = N-acetyl-D-muramate 6-phosphate + ADP + H(+). Its pathway is amino-sugar metabolism; 1,6-anhydro-N-acetylmuramate degradation. It participates in cell wall biogenesis; peptidoglycan recycling. Its function is as follows. Catalyzes the specific phosphorylation of 1,6-anhydro-N-acetylmuramic acid (anhMurNAc) with the simultaneous cleavage of the 1,6-anhydro ring, generating MurNAc-6-P. Is required for the utilization of anhMurNAc either imported from the medium or derived from its own cell wall murein, and thus plays a role in cell wall recycling. The sequence is that of Anhydro-N-acetylmuramic acid kinase from Cyanothece sp. (strain PCC 7425 / ATCC 29141).